Here is a 502-residue protein sequence, read N- to C-terminus: uncharacterized protein (502 aa).

This is an uncharacterized protein from Agrobacterium vitis (Rhizobium vitis).